We begin with the raw amino-acid sequence, 71 residues long: Conotoxin ba5b (71 aa).

The signal sequence occupies residues 1–19; the sequence is MLCLPVFITLLLLVSPSAA. Residues 20–52 constitute a propeptide that is removed on maturation; it reads LPVESELQRDLTQDSPKDFRIREPLLLSKMFDR. 2 disulfide bridges follow: Cys-54/Cys-63 and Cys-55/Cys-64. Cysteine amide is present on Cys-64. Residues 66–71 constitute a propeptide that is removed on maturation; it reads RYQRGS.

It belongs to the conotoxin T superfamily. In terms of tissue distribution, expressed by the venom duct.

It localises to the secreted. The polypeptide is Conotoxin ba5b (Conus bayani (Bayan's cone)).